The primary structure comprises 883 residues: MEKLSANKIRQLWIDFFRERNHFFIESKPLVPQNDDSLLWINSGVATLKDYFTGKKIPPSKRLVNSQKALRTNDIENVGLTSRHHTLFEMLGNFSIGDYFKTEAIDYAYEFLTKKLKLDPKNLFITYYDGDDITFEKWKSLGFSNEKLIKGSRKTNFWDLGQGPCGPCSEIYFDRGPKFDSRGSELIKNEIENDRFIEIWNIVFSEFNNDGQQNYTPLKSKNIDTGAGFERIVSILQDGPTNYDTDLFLPIIAEIEKNTVFRYKIENYFLKEPRQTQINKSFRIIADHIRAITLAINDGVQPSNLHRGYIIRRLIRRAYWNGKELGISHPFLYKLVEIVGKTLDYRFDIPTISKIILNEEENFAKTLEIGYNLLESQLKINKNQIKPVTVFKLFETYGFPVELTKEILAEKNIDFDLSQLVEFQEKHSQISRAKKTTGMQKVINSLTQIKAKISDFIGYHTHHIETKISFLANKDEEVAETNGENLSYVIFEKTPFYATAGGQKHDQGWIIQNNSTIEILDVFKDKFLNNIHVFKGKIVKNQPVFLKLDTKNRLNLERNHSGTHLLFASLRQEFGSEIKQLGSDNNEDRLTFDFPLNRKPSDQEIKSVENRINSYINQKIKRKYLVTNLEEAQKLNAIMTLEESEYMDPNSLRLVIFDKITTDLCGGTHIENTELLEKFTILSCQSKGSGIYRIRAVTSWNKYFEFLKGKIQEILSKISALKNKIKKIEPNFGLNLPNLVDLEQQFDYLKKIEDDLRIYYKKLLKSQLRIAKSELDANKIIEIGKFSFYLDFNLPLHNLKQIAATWREQNPRISFILGANLVNNEFLIIVSSAILASNQILEKIFEIFTGSGGGNYKIAQGKIQKKPEKEVFIKLLWENITEF.

Zn(2+) is bound by residues His560, His564, Cys665, and His669.

It belongs to the class-II aminoacyl-tRNA synthetase family. It depends on Zn(2+) as a cofactor.

It localises to the cytoplasm. It carries out the reaction tRNA(Ala) + L-alanine + ATP = L-alanyl-tRNA(Ala) + AMP + diphosphate. In terms of biological role, catalyzes the attachment of alanine to tRNA(Ala) in a two-step reaction: alanine is first activated by ATP to form Ala-AMP and then transferred to the acceptor end of tRNA(Ala). Also edits incorrectly charged Ser-tRNA(Ala) and Gly-tRNA(Ala) via its editing domain. This Mesomycoplasma hyopneumoniae (strain J / ATCC 25934 / NCTC 10110) (Mycoplasma hyopneumoniae) protein is Alanine--tRNA ligase.